A 312-amino-acid polypeptide reads, in one-letter code: MDIIFYHPTFDTQWWIEVLRKAIPQARVRAWKSGDNDSADYALVWHPPVEMLAGRDLKAVFALGAGVDSILSKLQAHPEMLKPSVPLFRLEDTGMGEQMQEYAVSQVLHWFRRFDDYRIQQNSSHWQPLPEYHREDFTIGILGAGVLGSKVAQSLQTWRFPLRCWSRTRKSWPGVQSFAGREELSAFLSQCRVLINLLPNTPATVGIINQQLLEKLPDGAYLLNLARGVHVVEDDLLAALDSGKVKGAMLDVFNREPLPPESPLWQHPRVTITPHVAAITCPAEAVDYISRTIAQLEKGERVCGQVDRARGY.

Residue R227 is part of the active site. Residue H275 is the Proton donor of the active site.

This sequence belongs to the D-isomer specific 2-hydroxyacid dehydrogenase family. GhrA subfamily.

The protein localises to the cytoplasm. The enzyme catalyses glycolate + NADP(+) = glyoxylate + NADPH + H(+). The catalysed reaction is (R)-glycerate + NAD(+) = 3-hydroxypyruvate + NADH + H(+). It carries out the reaction (R)-glycerate + NADP(+) = 3-hydroxypyruvate + NADPH + H(+). Functionally, catalyzes the NADPH-dependent reduction of glyoxylate and hydroxypyruvate into glycolate and glycerate, respectively. This is Glyoxylate/hydroxypyruvate reductase A from Escherichia coli O7:K1 (strain IAI39 / ExPEC).